Here is a 171-residue protein sequence, read N- to C-terminus: CASP-like protein 0U2 (171 aa).

Residues 1–22 are Cytoplasmic-facing; the sequence is MPVFGLAALKLNWEALSTPKFR. Residues 23–42 traverse the membrane as a helical segment; the sequence is VTFAQWVCSLLMWSLMASYS. The Extracellular portion of the chain corresponds to 43-48; sequence KHGEFK. The chain crosses the membrane as a helical span at residues 49–69; the sequence is FVVVFGLVMWGLASTYLVYQL. At 70 to 77 the chain is on the cytoplasmic side; it reads LNGPPLAP. A helical transmembrane segment spans residues 78 to 98; it reads IVEFWANVAAGSLAFICLVLA. Residues 99-121 are Extracellular-facing; that stretch reads SATCNRAVGEPQTKVCSGELKPK. Residues 122–142 traverse the membrane as a helical segment; the sequence is ASAAFAFLLLCAYGGLAYLSW. Topologically, residues 143–171 are cytoplasmic; it reads RTWRNPPTIASYALHDDPEFAQPLHSSHK.

It belongs to the Casparian strip membrane proteins (CASP) family. In terms of assembly, homodimer and heterodimers.

The protein resides in the cell membrane. This chain is CASP-like protein 0U2, found in Chlorokybus atmophyticus (Soil alga).